The chain runs to 223 residues: MTIAKMIDHTALKPDTTKEQILALTKEAREYGFASVCVNPTWVKLSAEQLAGAESVVCTVIGFPLGANTPEVKAFEVKDAIQNGAKEVDMVINIGALKDKDDELVERDIRAVVDAAKGKALVKVIIETCLLTDEEKVRACEIAVKAGTDFVKTSTGFSTGGATAEDIALMRKTVGPNIGVKASGGVRTKEDVEKMIEAGATRIGASAGVAIVSGEKPAKPDNY.

The Proton donor/acceptor role is filled by aspartate 89. Lysine 152 (schiff-base intermediate with acetaldehyde) is an active-site residue. Lysine 181 serves as the catalytic Proton donor/acceptor.

The protein belongs to the DeoC/FbaB aldolase family. DeoC type 1 subfamily.

It localises to the cytoplasm. The catalysed reaction is 2-deoxy-D-ribose 5-phosphate = D-glyceraldehyde 3-phosphate + acetaldehyde. The protein operates within carbohydrate degradation; 2-deoxy-D-ribose 1-phosphate degradation; D-glyceraldehyde 3-phosphate and acetaldehyde from 2-deoxy-alpha-D-ribose 1-phosphate: step 2/2. Catalyzes a reversible aldol reaction between acetaldehyde and D-glyceraldehyde 3-phosphate to generate 2-deoxy-D-ribose 5-phosphate. The chain is Deoxyribose-phosphate aldolase from Listeria monocytogenes serotype 4a (strain HCC23).